The following is a 382-amino-acid chain: Lipid-A-disaccharide synthase (382 aa).

This sequence belongs to the LpxB family.

The enzyme catalyses 2-N,3-O-bis[(3R)-3-hydroxytetradecanoyl]-alpha-D-glucosaminyl 1-phosphate + UDP-2-N,3-O-bis[(3R)-3-hydroxytetradecanoyl]-alpha-D-glucosamine = lipid A disaccharide (E. coli) + UDP + H(+). It catalyses the reaction a lipid X + a UDP-2-N,3-O-bis[(3R)-3-hydroxyacyl]-alpha-D-glucosamine = a lipid A disaccharide + UDP + H(+). It functions in the pathway glycolipid biosynthesis; lipid IV(A) biosynthesis; lipid IV(A) from (3R)-3-hydroxytetradecanoyl-[acyl-carrier-protein] and UDP-N-acetyl-alpha-D-glucosamine: step 5/6. In terms of biological role, condensation of UDP-2,3-diacylglucosamine and 2,3-diacylglucosamine-1-phosphate to form lipid A disaccharide, a precursor of lipid A, a phosphorylated glycolipid that anchors the lipopolysaccharide to the outer membrane of the cell. This is Lipid-A-disaccharide synthase from Citrobacter koseri (strain ATCC BAA-895 / CDC 4225-83 / SGSC4696).